The sequence spans 396 residues: Tryptophan synthase beta chain (396 aa).

K88 is subject to N6-(pyridoxal phosphate)lysine.

It belongs to the TrpB family. Tetramer of two alpha and two beta chains. The cofactor is pyridoxal 5'-phosphate.

It catalyses the reaction (1S,2R)-1-C-(indol-3-yl)glycerol 3-phosphate + L-serine = D-glyceraldehyde 3-phosphate + L-tryptophan + H2O. It participates in amino-acid biosynthesis; L-tryptophan biosynthesis; L-tryptophan from chorismate: step 5/5. Its function is as follows. The beta subunit is responsible for the synthesis of L-tryptophan from indole and L-serine. The chain is Tryptophan synthase beta chain from Shewanella sp. (strain MR-7).